The primary structure comprises 327 residues: Arabinose 5-phosphate isomerase KpsF (327 aa).

Residues 48-191 (VLNLIMNCKG…AIAMIHQRKF (144 aa)) enclose the SIS domain. Residue 63 to 68 (GMGKSG) coordinates ATP. Substrate contacts are provided by residues 82–83 (GT), His-89, His-95, 121–130 (KLVPSLKNFG), and 155–157 (HMA). His-89 contacts Zn(2+). CBS domains follow at residues 217–273 (MQHD…EGSL) and 282–327 (MTRE…RIFD).

As to quaternary structure, homotetramer.

The enzyme catalyses D-arabinose 5-phosphate = D-ribulose 5-phosphate. Inhibited by 10 uM zinc, cadmium or mercury ions. In terms of biological role, involved in the biosynthesis of K-antigen capsules. Catalyzes the reversible aldol-ketol isomerization between D-ribulose 5-phosphate (Ru5P) and D-arabinose 5-phosphate (A5P). This is Arabinose 5-phosphate isomerase KpsF from Escherichia coli O6:H1 (strain CFT073 / ATCC 700928 / UPEC).